Reading from the N-terminus, the 185-residue chain is MTTEIMNELKSKMEKSIESLQRDFAAIRAGHANANLLDRVSVVYYGAETPVQQLAGISVPEPRMLLVTPYDKTSIDDILKAINMANLGVNPTSDGNVIRITVPALTEERRKELVKEAKKEAENSKIAIRNIRRDANDALKKAEKAGDITEDDLKSFSDDVQAETDKFIKKIDELTASKEKDILEV.

This sequence belongs to the RRF family.

It localises to the cytoplasm. Functionally, responsible for the release of ribosomes from messenger RNA at the termination of protein biosynthesis. May increase the efficiency of translation by recycling ribosomes from one round of translation to another. The polypeptide is Ribosome-recycling factor (Macrococcus caseolyticus (strain JCSC5402) (Macrococcoides caseolyticum)).